A 452-amino-acid polypeptide reads, in one-letter code: Enolase (452 aa).

(2R)-2-phosphoglycerate is bound at residue Q167. The Proton donor role is filled by E209. Positions 250, 310, and 337 each coordinate Mg(2+). K362, R391, S392, and K413 together coordinate (2R)-2-phosphoglycerate. K362 (proton acceptor) is an active-site residue.

This sequence belongs to the enolase family. Mg(2+) serves as cofactor.

The protein resides in the cytoplasm. The protein localises to the secreted. It is found in the cell surface. It catalyses the reaction (2R)-2-phosphoglycerate = phosphoenolpyruvate + H2O. It functions in the pathway carbohydrate degradation; glycolysis; pyruvate from D-glyceraldehyde 3-phosphate: step 4/5. Catalyzes the reversible conversion of 2-phosphoglycerate (2-PG) into phosphoenolpyruvate (PEP). It is essential for the degradation of carbohydrates via glycolysis. The protein is Enolase of Mycoplasmopsis synoviae (strain 53) (Mycoplasma synoviae).